We begin with the raw amino-acid sequence, 338 residues long: Glycerol-3-phosphate dehydrogenase [NAD(P)+] (338 aa).

NADPH is bound by residues S14, Y15, H35, and K109. 3 residues coordinate sn-glycerol 3-phosphate: K109, G138, and T140. A142 contacts NADPH. Positions 194, 247, 257, 258, and 259 each coordinate sn-glycerol 3-phosphate. The active-site Proton acceptor is the K194. R258 contributes to the NADPH binding site. Residues V282 and E284 each coordinate NADPH.

Belongs to the NAD-dependent glycerol-3-phosphate dehydrogenase family.

The protein localises to the cytoplasm. The enzyme catalyses sn-glycerol 3-phosphate + NAD(+) = dihydroxyacetone phosphate + NADH + H(+). It catalyses the reaction sn-glycerol 3-phosphate + NADP(+) = dihydroxyacetone phosphate + NADPH + H(+). Its pathway is membrane lipid metabolism; glycerophospholipid metabolism. Its function is as follows. Catalyzes the reduction of the glycolytic intermediate dihydroxyacetone phosphate (DHAP) to sn-glycerol 3-phosphate (G3P), the key precursor for phospholipid synthesis. This Shewanella sediminis (strain HAW-EB3) protein is Glycerol-3-phosphate dehydrogenase [NAD(P)+].